Reading from the N-terminus, the 285-residue chain is 1-acyl-sn-glycerol-3-phosphate acyltransferase alpha (285 aa).

Positions 1-28 (MELWPGAWTALLLLLLLLLSTLWFCSSS) are cleaved as a signal peptide. The Lumenal segment spans residues 29–34 (AKYFFK). Residues 35 to 55 (MAFYNGWILFLAILAIPVCAV) form a helical membrane-spanning segment. Residues 56 to 124 (RGRNVENMKI…PDRCVPIAKR (69 aa)) are Cytoplasmic-facing. Positions 101–106 (HQSSLD) match the HXXXXD motif motif. A helical membrane pass occupies residues 125–145 (ELLWAGSAGLACWLAGIIFID). Residues 146-189 (RKRTGDAISVMSEVAQTLLTQDVRVWVFPEGTRNHNGSMLPFKR) are Lumenal-facing. The short motif at 175 to 178 (EGTR) is the EGTR motif element.

This sequence belongs to the 1-acyl-sn-glycerol-3-phosphate acyltransferase family. Widely expressed.

Its subcellular location is the endoplasmic reticulum membrane. The enzyme catalyses a 1-acyl-sn-glycero-3-phosphate + an acyl-CoA = a 1,2-diacyl-sn-glycero-3-phosphate + CoA. The catalysed reaction is 1-(9Z-octadecenoyl)-sn-glycero-3-phosphate + (9Z)-octadecenoyl-CoA = 1,2-di-(9Z-octadecenoyl)-sn-glycero-3-phosphate + CoA. It carries out the reaction 1-(9Z-octadecenoyl)-sn-glycero-3-phosphate + hexadecanoyl-CoA = 1-(9Z)-octadecenoyl-2-hexadecanoyl-sn-glycero-3-phosphate + CoA. It catalyses the reaction heptadecanoyl-CoA + 1-(9Z-octadecenoyl)-sn-glycero-3-phosphate = 1-(9Z)-octadecenoyl-2-heptadecanoyl-sn-glycero-3-phosphate + CoA. The enzyme catalyses 1-(9Z-octadecenoyl)-sn-glycero-3-phosphate + octadecanoyl-CoA = 1-(9Z-octadecenoyl)-2-octadecanoyl-sn-glycero-3-phosphate + CoA. The catalysed reaction is 1-(9Z-octadecenoyl)-sn-glycero-3-phosphate + (9Z,12Z)-octadecadienoyl-CoA = 1-(9Z)-octadecenoyl-2-(9Z,12Z)-octadecadienoyl-sn-glycero-3-phosphate + CoA. It carries out the reaction 1-(9Z-octadecenoyl)-sn-glycero-3-phosphate + tetradecanoyl-CoA = 1-(9Z)-octadecenoyl-2-tetradecanoyl-sn-glycero-3-phosphate + CoA. It catalyses the reaction pentadecanoyl-CoA + 1-(9Z-octadecenoyl)-sn-glycero-3-phosphate = 1-(9Z)-octadecenoyl-2-pentadecanoyl-sn-glycero-3-phosphate + CoA. The enzyme catalyses 1-hexadecanoyl-sn-glycero-3-phosphate + (9Z)-octadecenoyl-CoA = 1-hexadecanoyl-2-(9Z-octadecenoyl)-sn-glycero-3-phosphate + CoA. The catalysed reaction is 1-(9Z,12Z,15Z)-octadecatrienoyl-sn-glycero-3-phosphate + (9Z)-octadecenoyl-CoA = 1-(9Z,12Z,15Z)-octadecatrienoyl-2-(9Z)-octadecenoyl-sn-glycero-3-phosphate + CoA. It carries out the reaction 1-(6Z,9Z,12Z-octadecatrienoyl)-sn-glycero-3-phosphate + (9Z)-octadecenoyl-CoA = (6Z,9Z,12Z)-octadecatrienoyl-2-(9Z)-octadecenoyl-sn-glycero-3-phosphate + CoA. It catalyses the reaction 1-eicosanoyl-sn-glycero-3-phosphate + (9Z)-octadecenoyl-CoA = 1-eicosanoyl-2-(9Z)-octadecenoyl-sn-glycero-3-phosphate + CoA. The enzyme catalyses 1-tetradecanoyl-sn-glycerol 3-phosphate + (9Z)-octadecenoyl-CoA = 1-tetradecanoyl-2-(9Z)-octadecenoyl-sn-glycero-3-phosphate + CoA. The catalysed reaction is 1-(9Z-octadecenoyl)-sn-glycero-3-phosphate + (5Z,8Z,11Z,14Z)-eicosatetraenoyl-CoA = 1-(9Z)-octadecenoyl-2-(5Z,8Z,11Z,14Z)-eicosatetraenoyl-sn-glycero-3-phosphate + CoA. It carries out the reaction 1-(9Z-octadecenoyl)-sn-glycero-3-phosphate + dodecanoyl-CoA = 1-(9Z)-octadecenoyl-2-dodecanoyl-sn-glycero-3-phosphate + CoA. It catalyses the reaction (6Z)-octadecenoyl-CoA + 1-(9Z-octadecenoyl)-sn-glycero-3-phosphate = 1-(9Z)-octadecenoyl-2-(6Z)-octadecenoyl-sn-glycero-3-phosphate + CoA. The enzyme catalyses (11Z)-octadecenoyl-CoA + 1-(9Z-octadecenoyl)-sn-glycero-3-phosphate = 1-(9Z)-octadecenoyl-2-(11Z)-octadecenoyl-sn-glycero-3-phosphate + CoA. The catalysed reaction is (9Z)-hexadecenoyl-CoA + 1-(9Z-octadecenoyl)-sn-glycero-3-phosphate = 1-(9Z-octadecenoyl)-2-(9Z-hexadecenoyl)-sn-glycero-3-phosphate + CoA. It functions in the pathway phospholipid metabolism; CDP-diacylglycerol biosynthesis; CDP-diacylglycerol from sn-glycerol 3-phosphate: step 2/3. In terms of biological role, converts 1-acyl-sn-glycerol-3-phosphate (lysophosphatidic acid or LPA) into 1,2-diacyl-sn-glycerol-3-phosphate (phosphatidic acid or PA) by incorporating an acyl moiety at the sn-2 position of the glycerol backbone. In Mus musculus (Mouse), this protein is 1-acyl-sn-glycerol-3-phosphate acyltransferase alpha (Agpat1).